Here is a 150-residue protein sequence, read N- to C-terminus: Arginine repressor (150 aa).

Belongs to the ArgR family.

Its subcellular location is the cytoplasm. Its pathway is amino-acid biosynthesis; L-arginine biosynthesis [regulation]. Functionally, regulates arginine biosynthesis genes. The protein is Arginine repressor of Finegoldia magna (strain ATCC 29328 / DSM 20472 / WAL 2508) (Peptostreptococcus magnus).